A 578-amino-acid chain; its full sequence is Protein O-linked-mannose beta-1,4-N-acetylglucosaminyltransferase 2 (578 aa).

Topologically, residues 1-4 are cytoplasmic; the sequence is MNLP. The helical; Signal-anchor for type II membrane protein transmembrane segment at 5–25 threads the bilayer; sequence AVLNGLLVSVVAALLWKYVRL. Topologically, residues 26–578 are lumenal; that stretch reads VEHTSQLEEE…PFADVLICKT (553 aa). Asn98, Asn275, and Asn541 each carry an N-linked (GlcNAc...) asparagine glycan. In terms of domain architecture, Fibronectin type-III spans 482-578; sequence RVREPKCQTS…PFADVLICKT (97 aa).

The protein belongs to the glycosyltransferase 61 family.

The protein resides in the endoplasmic reticulum membrane. The enzyme catalyses 3-O-(alpha-D-mannosyl)-L-threonyl-[protein] + UDP-N-acetyl-alpha-D-glucosamine = 3-O-(N-acetyl-beta-D-glucosaminyl-(1-&gt;4)-alpha-D-mannosyl)-L-threonyl-[protein] + UDP + H(+). It functions in the pathway protein modification; protein glycosylation. Its function is as follows. O-linked mannose beta-1,4-N-acetylglucosaminyltransferase that transfers UDP-N-acetyl-D-glucosamine to the 4-position of the mannose to generate N-acetyl-D-glucosamine-beta-1,4-O-D-mannosylprotein. Involved in the biosynthesis of the phosphorylated O-mannosyl trisaccharide (N-acetylgalactosamine-beta-3-N-acetylglucosamine-beta-4-(phosphate-6-)mannose), a carbohydrate structure present in alpha-dystroglycan (DAG1), which is required for binding laminin G-like domain-containing extracellular proteins with high affinity. This Danio rerio (Zebrafish) protein is Protein O-linked-mannose beta-1,4-N-acetylglucosaminyltransferase 2 (pomgnt2).